A 208-amino-acid chain; its full sequence is Ribosomal RNA small subunit methyltransferase G (208 aa).

S-adenosyl-L-methionine contacts are provided by residues Gly-78, Phe-83, Glu-101–Ser-103, Ile-129–Glu-130, and Arg-142.

It belongs to the methyltransferase superfamily. RNA methyltransferase RsmG family.

It is found in the cytoplasm. In terms of biological role, specifically methylates the N7 position of a guanine in 16S rRNA. This is Ribosomal RNA small subunit methyltransferase G from Borreliella burgdorferi (strain ATCC 35210 / DSM 4680 / CIP 102532 / B31) (Borrelia burgdorferi).